Here is a 400-residue protein sequence, read N- to C-terminus: 3-hydroxybenzoate 6-hydroxylase (400 aa).

The protein belongs to the 3-hydroxybenzoate 6-hydroxylase family. In terms of assembly, monomer. Requires FAD as cofactor.

The enzyme catalyses 3-hydroxybenzoate + NADH + O2 + H(+) = 2,5-dihydroxybenzoate + NAD(+) + H2O. Its function is as follows. Catalyzes the NAD- or NADP-dependent conversion of 3-hydroxybenzoate to gentisate. The affinity of the enzyme toward NAD is twice as high as for NADP. The protein is 3-hydroxybenzoate 6-hydroxylase (nagX) of Polaromonas naphthalenivorans (strain CJ2).